Consider the following 1756-residue polypeptide: Multifunctional conjugation protein TraI (1756 aa).

The interval 1–330 (MLSFSVVKSA…TQAIAGLSER (330 aa)) is DNA relaxase. Catalysis depends on Tyr16, which acts as the O-(5'-phospho-DNA)-tyrosine intermediate; for relaxase activity. Tyr17 acts as the Relaxase in catalysis. Mg(2+)-binding residues include His146, His157, and His159. The interval 950–1500 (GKEAVTPLME…LRDVAAGRAV (551 aa)) is DNA helicase I. ATP is bound at residue 992–999 (GYAGVGKT). Positions 1719 to 1753 (EQEAVREVARENLLQERLQQIERDMVRDLQKEKTL) form a coiled coil.

This sequence to TraI of plasmid F. In terms of assembly, monomer. Part of the relaxosome, a complex composed of plasmid-encodes TraI, TraM, TraY and host-encoded IHF bound to the F plasmid origin of transfer (oriT). Directly contacts coupling protein TraD. Seems to directly contact TraM via its C-terminus. The cofactor is Mg(2+).

It localises to the cytoplasm. The enzyme catalyses ATP-independent breakage of single-stranded DNA, followed by passage and rejoining.. The catalysed reaction is ATP + H2O = ADP + phosphate + H(+). Its function is as follows. Conjugative DNA transfer (CDT) is the unidirectional transfer of ssDNA plasmid from a donor to a recipient cell. It is the central mechanism by which antibiotic resistance and virulence factors are propagated in bacterial populations. Part of the relaxosome, which facilitates a site- and strand-specific cut in the origin of transfer by TraI, at the nic site. Relaxosome formation requires binding of IHF and TraY to the oriT region, which then facilitates binding of TraI relaxase. TraI forms a covalent 5'-phosphotyrosine intermediate linkage to the ssDNA. The transesterified T-strand moves from the donor cell to the recipient cell in a 5'to 3' direction, with the DNA helicase activity of TraI unwinding the DNA. DNA transfer occurs via the conjugative pore (transferosome) an intercellular junction mediated by a type IV secretion system, with TraD providing the means to link the relaxosome to the conjugative pore. The relaxase completes DNA transfer by reversing the covalent phosphotyrosine linkage and releasing the T-strand. In terms of biological role, traI has also been identified as DNA helicase I. DNA. helicase I is a potent, highly processive DNA-dependent ATPase, able to unwind about 1.1 kb dsDNA per second in a 5' to 3' manner. The polypeptide is Multifunctional conjugation protein TraI (traI) (Escherichia coli).